Here is a 228-residue protein sequence, read N- to C-terminus: Urease accessory protein UreF 1 (228 aa).

It belongs to the UreF family. In terms of assembly, ureD, UreF and UreG form a complex that acts as a GTP-hydrolysis-dependent molecular chaperone, activating the urease apoprotein by helping to assemble the nickel containing metallocenter of UreC. The UreE protein probably delivers the nickel.

The protein resides in the cytoplasm. Functionally, required for maturation of urease via the functional incorporation of the urease nickel metallocenter. Its function is as follows. Disruption of the ure1 gene cluster suggests that it protects brucellae during their passage through the stomach. The major route of infection in human brucellosis is oral. This is Urease accessory protein UreF 1 from Brucella abortus (strain 2308).